We begin with the raw amino-acid sequence, 426 residues long: High affinity 3',5'-cyclic-AMP phosphodiesterase 7A (426 aa).

The region spanning 80–402 (LDEDYNGQAK…ASWKGLQRQQ (323 aa)) is the PDEase domain. Histidine 156 serves as the catalytic Proton donor. Residues histidine 160, histidine 196, aspartate 197, and aspartate 306 each contribute to the a divalent metal cation site.

It belongs to the cyclic nucleotide phosphodiesterase family. PDE7 subfamily. As to quaternary structure, interacts with CBFA2T3. A divalent metal cation is required as a cofactor.

The protein localises to the cytoplasm. Its subcellular location is the cytosol. It catalyses the reaction 3',5'-cyclic AMP + H2O = AMP + H(+). It participates in purine metabolism; 3',5'-cyclic AMP degradation; AMP from 3',5'-cyclic AMP: step 1/1. Hydrolyzes the second messenger cAMP, which is a key regulator of many important physiological processes. May have a role in muscle signal transduction. In Rattus norvegicus (Rat), this protein is High affinity 3',5'-cyclic-AMP phosphodiesterase 7A (Pde7a).